The primary structure comprises 480 residues: Docking protein 1 (480 aa).

N-acetylmethionine is present on Met-1. In terms of domain architecture, PH spans 3-119 (GALMEGPLFL…WVQILCRTAF (117 aa)). Ser-48 is modified (phosphoserine). Residues 151–259 (EGSQFWVTSQ…QQQKAQGKVG (109 aa)) form the IRS-type PTB domain. The segment covering 253 to 262 (KAQGKVGQGQ) has biased composition (low complexity). Residues 253–328 (KAQGKVGQGQ…GSTPAGAGEG (76 aa)) are disordered. A compositionally biased stretch (basic and acidic residues) spans 265–276 (TRTDSHDGETEG). A phosphoserine mark is found at Ser-269 and Ser-290. 3 positions are modified to phosphotyrosine: Tyr-295, Tyr-336, and Tyr-340. Tyr-361 bears the Phosphotyrosine; by INSR mark. Tyr-376 carries the post-translational modification Phosphotyrosine. Residue Tyr-397 is modified to Phosphotyrosine; by INSR. The segment at 398–480 (ELPYNPATDD…RVGVKSEGST (83 aa)) is disordered. Position 408 is a phosphotyrosine (Tyr-408). Over residues 410 to 423 (VPPPRSSKPTPAPK) the composition is skewed to pro residues. Position 415 is a phosphoserine (Ser-415). Residues 432–445 (SGTTAGSGSKGSDT) are compositionally biased toward low complexity. Positions 446–455 (ALYSQVQKSG) are enriched in polar residues. Phosphotyrosine is present on Tyr-448.

This sequence belongs to the DOK family. Type A subfamily. As to quaternary structure, interacts with RasGAP and INPP5D/SHIP1. Interacts directly with phosphorylated ITGB3. Interacts with SRMS (via the SH2 and SH3 domains). In terms of processing, constitutively tyrosine-phosphorylated. Phosphorylated by TEC. Phosphorylated by LYN. Phosphorylated on tyrosine residues by the insulin receptor kinase. Results in the negative regulation of the insulin signaling pathway. Phosphorylated on tyrosine residues by SRMS.

It is found in the cytoplasm. The protein resides in the nucleus. Functionally, DOK proteins are enzymatically inert adaptor or scaffolding proteins. They provide a docking platform for the assembly of multimolecular signaling complexes. DOK1 appears to be a negative regulator of the insulin signaling pathway. Modulates integrin activation by competing with talin for the same binding site on ITGB3. In Rattus norvegicus (Rat), this protein is Docking protein 1 (Dok1).